The primary structure comprises 265 residues: Speedy protein E13 (265 aa).

The tract at residues 1–80 (MGQILGKIMM…EPEKELAPEP (80 aa)) is disordered. A compositionally biased stretch (acidic residues) spans 66–80 (DESDDEPEKELAPEP).

This sequence belongs to the Speedy/Ringo family.

The polypeptide is Speedy protein E13 (Homo sapiens (Human)).